A 260-amino-acid chain; its full sequence is D-threitol dehydrogenase (260 aa).

Position 21–50 (21–50 (LVTGAASGIGAAIASAYATKGARIAAVDLN)) interacts with NAD(+). Tyr166 (proton acceptor) is an active-site residue. An NAD(+)-binding site is contributed by Lys170.

It belongs to the short-chain dehydrogenases/reductases (SDR) family.

The catalysed reaction is D-threitol + NAD(+) = D-erythrulose + NADH + H(+). The protein operates within carbohydrate metabolism; D-threitol degradation. Functionally, catalyzes the NAD-dependent reversible oxidation of D-threitol. Involved in the degradation pathway of D-threitol, that allows M.smegmatis to grow on this compound as the sole carbon source. Does not catalyze the oxidation of xylitol, L-sorbitol, and L-sorbose. This Mycolicibacterium smegmatis (strain ATCC 700084 / mc(2)155) (Mycobacterium smegmatis) protein is D-threitol dehydrogenase.